Reading from the N-terminus, the 112-residue chain is Small ribosomal subunit protein bS16 (112 aa).

This sequence belongs to the bacterial ribosomal protein bS16 family.

The chain is Small ribosomal subunit protein bS16 from Karelsulcia muelleri (strain GWSS) (Sulcia muelleri).